The primary structure comprises 730 residues: MAPKSKKAPSKKKMTKAERLRLMQEEEERRLKEEEEARLKFEKEEQERLEIQRIEREKWNLLEKKDLERRSQELEELALLEGCFPEAEKQKREIRALAQWKHYTECDGSPDPWVAQEMNTFISLWEEEKNQAFEQVMEKSKLVLSLIEKVKLILLETPTYELDHRTVLQHQGSILRLQELLSLKINVATELLLRQASNLADLDTGNMEKIIKDENVTLYVWANLKKNPRHRSVRFSETQIGFEIPRILATSNVALRLLHTRYDHITPLFPIAVTEQNQNPVGAEQVNVEESTEKAMTEEKLFTEEKAANEDEQPKAEQERELNLVQEENKYEAIENTVLQRTSDSEGEDSQTTQLELEMKLLSEAVLAAQLCLVENVVELPEASQAYKVDLCHFSTLGGVYHLDVLELPPQCKPVKGWVLVEILQEGLQRFIYPPDTTEEPDPDVTFPPIEVTLEIHKSVIFFERPRVVRWDNEGKFWRSDGISSVYYNREDRLLTFSMDTLGPVTLIQDAHVNMPYQSWEMSPCGMNKVLLIVKTVFMELQIYIKENLCMLASVKLRGKGLEFHLKGKWMAPIPFILALKEAGLNIFPAVYSHFYVVINNKVPQVELKAYRQMALLSSAFSFGWSKWNMVCNSTRVVIRVREQLSEETEHHTWSLLMFSGDRAQMLKMQEENDKFSEALREGTEFHSTLYHMMKDFASPVAMERVRHSNCQFIDSVCYMLLSIRVLSYS.

Positions 1 to 14 are enriched in basic residues; that stretch reads MAPKSKKAPSKKKM. Residues 1–20 are disordered; that stretch reads MAPKSKKAPSKKKMTKAERL.

It belongs to the DNAI7 family. As to quaternary structure, part of the multisubunit axonemal dynein complex formed at least of two heavy chains and a number of intermediate and light chains. Interacts with tubulin. Associates with microtubule. Ubiquitinated. Ubiquitination leads to its degradation through the 26S proteasome. Ubiquitin-proteasome-mediated DNAI7 degradation occurs in mitosis. In terms of tissue distribution, high expressed in lung, kidney, and testis.

The protein localises to the cell projection. It localises to the cilium. Its subcellular location is the cytoplasm. Functionally, via its association with the multisubunit axonemal dynein complex, is potentially involved in the regulation of cilia function. May also act as a cell cycle regulator. This Mus musculus (Mouse) protein is Dynein axonemal intermediate chain 7 (Dnai7).